Here is a 981-residue protein sequence, read N- to C-terminus: Rab3 GTPase-activating protein catalytic subunit (981 aa).

Ser83, Ser379, Ser537, Ser579, Ser581, and Ser590 each carry phosphoserine. The segment at 592 to 613 is disordered; that stretch reads TEELKGNGQESGKKGGPKEMAN. Ser664 carries the phosphoserine modification. Thr908 carries the post-translational modification Phosphothreonine. The tract at residues 908–937 is disordered; that stretch reads TPPEEELKRMGSPEERRQNSVSDFPPPAGR. The span at 912 to 925 shows a compositional bias: basic and acidic residues; sequence EELKRMGSPEERRQ.

This sequence belongs to the Rab3-GAP catalytic subunit family. As to quaternary structure, the Rab3 GTPase-activating complex is a heterodimer composed of RAB3GAP1 and RAB3GAP2. The Rab3 GTPase-activating complex interacts with DMXL2. Interacts with LMAN1. As to expression, ubiquitous.

The protein resides in the cytoplasm. It localises to the endoplasmic reticulum. Its subcellular location is the golgi apparatus. It is found in the cis-Golgi network. Catalytic subunit of the Rab3 GTPase-activating (Rab3GAP) complex composed of RAB3GAP1 and RAB3GAP2, which has GTPase-activating protein (GAP) activity towards various Rab3 subfamily members (RAB3A, RAB3B, RAB3C and RAB3D), RAB5A and RAB43, and guanine nucleotide exchange factor (GEF) activity towards RAB18. As part of the Rab3GAP complex, acts as a GAP for Rab3 proteins by converting active RAB3-GTP to the inactive form RAB3-GDP. Rab3 proteins are involved in regulated exocytosis of neurotransmitters and hormones. The Rab3GAP complex, acts as a GEF for RAB18 by promoting the conversion of inactive RAB18-GDP to the active form RAB18-GTP. Recruits and stabilizes RAB18 at the cis-Golgi membrane in fibroblasts where RAB18 is most likely activated. Also involved in RAB18 recruitment at the endoplasmic reticulum (ER) membrane where it maintains proper ER structure. Required for normal eye and brain development. May participate in neurodevelopmental processes such as proliferation, migration and differentiation before synapse formation, and non-synaptic vesicular release of neurotransmitters. The protein is Rab3 GTPase-activating protein catalytic subunit of Homo sapiens (Human).